Consider the following 305-residue polypeptide: Tetraspanin-12 (305 aa).

Over 1–12 the chain is Cytoplasmic; the sequence is MAREDSVRCLRC. Residues Cys9 and Cys12 are each lipidated (S-palmitoyl cysteine). Residues 13–33 form a helical membrane-spanning segment; the sequence is LLYALNLLFWLMSISVLGVSA. Residues 34–59 lie on the Extracellular side of the membrane; sequence WIRDYLNNVLTLTAETRVEEAVILTY. The helical transmembrane segment at 60–80 threads the bilayer; it reads FPVVHPVMIAVCCFLILVGML. The Cytoplasmic portion of the chain corresponds to 81–89; that stretch reads GYCGTVKRN. Cys83 carries S-palmitoyl cysteine lipidation. A helical membrane pass occupies residues 90–110; it reads LLLLVWYFGSLLVIFCVELAC. At 111–224 the chain is on the extracellular side; that stretch reads GVWTYEQEIT…RGTKQLQVLR (114 aa). Residues 225 to 245 form a helical membrane-spanning segment; the sequence is FLGISIGVTQILAMILTITLL. Residues 246-305 lie on the Cytoplasmic side of the membrane; it reads WALYYDRRDPGADQIMSLKNDTSQQLSCHSVELLKPSLTGIFEHTSMANSFNTHFEMEEL.

This sequence belongs to the tetraspanin (TM4SF) family. In terms of assembly, component of a complex, at least composed of TSPAN12, FZD4 and norrin (NDP). Post-translationally, palmitoylated; required for interaction with ADAM10. The precise position of palmitoylated residues is unclear and occurs either on Cys-9, Cys-12 and/or Cys-83.

The protein resides in the cell membrane. Functionally, regulator of cell surface receptor signal transduction. Plays a central role in retinal vascularization by regulating norrin (NDP) signal transduction. Acts in concert with norrin (NDP) to promote FZD4 multimerization and subsequent activation of FZD4, leading to promote accumulation of beta-catenin (CTNNB1) and stimulate LEF/TCF-mediated transcriptional programs. Suprisingly, it only activates the norrin (NDP)-dependent activation of FZD4, while it does not activate the Wnt-dependent activation of FZD4, suggesting the existence of a Wnt-independent signaling that also promote accumulation the beta-catenin (CTNNB1). The sequence is that of Tetraspanin-12 (TSPAN12) from Gallus gallus (Chicken).